A 242-amino-acid chain; its full sequence is Ubiquinone biosynthesis O-methyltransferase (242 aa).

Positions 44, 64, 85, and 129 each coordinate S-adenosyl-L-methionine.

This sequence belongs to the methyltransferase superfamily. UbiG/COQ3 family.

It catalyses the reaction a 3-demethylubiquinol + S-adenosyl-L-methionine = a ubiquinol + S-adenosyl-L-homocysteine + H(+). The enzyme catalyses a 3-(all-trans-polyprenyl)benzene-1,2-diol + S-adenosyl-L-methionine = a 2-methoxy-6-(all-trans-polyprenyl)phenol + S-adenosyl-L-homocysteine + H(+). It participates in cofactor biosynthesis; ubiquinone biosynthesis. Its function is as follows. O-methyltransferase that catalyzes the 2 O-methylation steps in the ubiquinone biosynthetic pathway. The chain is Ubiquinone biosynthesis O-methyltransferase from Citrobacter koseri (strain ATCC BAA-895 / CDC 4225-83 / SGSC4696).